Reading from the N-terminus, the 528-residue chain is PC4 and SFRS1-interacting protein (528 aa).

The PWWP domain maps to 7–64 (PGDLIFAKMKGYPHWPARVDEVPDGAVKPPTNKLPIFFFGTHETAFLGPKDIFPYSEN). Residue K75 forms a Glycyl lysine isopeptide (Lys-Gly) (interchain with G-Cter in SUMO2) linkage. Residues 86 to 347 (NNPKVKFSSQ…VEKKRETSMD (262 aa)) form a disordered region. Residues 92–106 (FSSQQVSTKQSNASS) are compositionally biased toward polar residues. S102, S105, and S106 each carry phosphoserine. Over residues 113–135 (KETSVSKEDTDQEEKASNEDVTK) the composition is skewed to basic and acidic residues. 2 positions are modified to phosphothreonine: T115 and T122. S129 is subject to Phosphoserine. Residue T141 is modified to Phosphothreonine. The span at 144–153 (AARRGRKRKA) shows a compositional bias: basic residues. A Nuclear localization signal motif is present at residues 146–156 (RRGRKRKAEKQ). Phosphoserine is present on residues S176 and S205. Positions 212–260 (DEDKSKKKGPEEKPPKKQLKKEEEGQKEEEKPRKEPDKKEGKKEVESKR) are enriched in basic and acidic residues. The residue at position 270 (S270) is a Phosphoserine. Phosphothreonine is present on T271. 2 positions are modified to phosphoserine: S272 and S274. A compositionally biased stretch (basic residues) spans 285–300 (KRKGGRHFQAAHRRNM). Positions 303-347 (GQHEKEAADRKRKQEEQMETEQQTKDEGKKPEVKKVEKKRETSMD) are enriched in basic and acidic residues. Coiled-coil stretches lie at residues 304-332 (QHEK…EGKK) and 369-393 (NRCI…KHTE). The integrase-binding domain (IBD) stretch occupies residues 338-415 (VEKKRETSMD…VSQVIMEKST (78 aa)). Phosphoserine is present on S432. T435 is modified (phosphothreonine). S441 is modified (phosphoserine). Positions 444-471 (EQRQHEEANKTKDQGKKGPNKKLEKEQT) are enriched in basic and acidic residues. A disordered region spans residues 444–528 (EQRQHEEANK…VSLKESTLDN (85 aa)). Polar residues predominate over residues 472–492 (GTKSLNGGSDAQESNHPQHNG). Residues 496-528 (EESKDSREAGSKTKTPGEEREAEVSLKESTLDN) show a composition bias toward basic and acidic residues. A Citrulline modification is found at R515. S520 is subject to Phosphoserine. The residue at position 525 (T525) is a Phosphothreonine.

The protein belongs to the HDGF family. As to quaternary structure, monomer. Interacts with IFRD1/PC4. Interacts (via IBD domain) with POGZ (via IBM motif) and CDCA7L (via IBM motifs). Interacts (via IBD domain) with KMT2A (via IBM motifs) with a moderate affinity whereas interacts with the KMT2A-MEN1 complex with a greater affinity; MEN1 enhances interaction of KMT2A with PSIP1. Interacts (via IBD domain) with IWS1 (via IBM motif), MED1 (via IBM motif) and DBF4 (via IBM motifs). Citrullinated by PADI4.

Its subcellular location is the nucleus. Its function is as follows. Transcriptional coactivator involved in neuroepithelial stem cell differentiation and neurogenesis. Involved in particular in lens epithelial cell gene regulation and stress responses. May play an important role in lens epithelial to fiber cell terminal differentiation. May play a protective role during stress-induced apoptosis. The sequence is that of PC4 and SFRS1-interacting protein (Psip1) from Rattus norvegicus (Rat).